The sequence spans 462 residues: Myo-inositol transporter 3B (462 aa).

The next 10 membrane-spanning stretches (helical) occupy residues 1 to 21, 31 to 51, 61 to 81, 91 to 111, 194 to 214, 218 to 238, 245 to 265, 289 to 309, 324 to 344, and 354 to 374; these read MAILISDVFFTIGAVLIASSY, IILGIGVGGAAVIAPLFITET, IGVNAFFIPFGQVVADAIGAG, LLFALGVVPSVLQLLLFHYLP, LCGFNTLLYYAGTLFGLLGLS, LGGLIPAGTNAVFVLIGMSLV, GLMLFGVPIMLLGLVWNIIGF, VVIGGIVFFVVGYGLTYSHLV, GSGVATTVCWIANLVVSVSYL, and GTYGFYLGLSVIGFAFVVFCF.

It belongs to the major facilitator superfamily. Sugar transporter (TC 2.A.1.1) family.

The protein resides in the cell membrane. It catalyses the reaction myo-inositol(out) + H(+)(out) = myo-inositol(in) + H(+)(in). Functionally, transporter for myo-inositol. The polypeptide is Myo-inositol transporter 3B (Cryptococcus neoformans var. grubii serotype A (strain H99 / ATCC 208821 / CBS 10515 / FGSC 9487) (Filobasidiella neoformans var. grubii)).